A 350-amino-acid polypeptide reads, in one-letter code: MDTGFADSNNDSSPGEGSKRGNSGIEGPVPMDVELAAAKSKRLSEPFFLKNVLLEKSGDTSDLTALALSVHAVMLESGFVLLDHGSDKFSFSKKLLSVSLRYTLPELITRKDTNTVESVTVRFQNIGPRLVVYGTLGGSCKRVHMTSLDKSRFLPVIDLVVDTLKFEKQGSSSYYREVFMLWRMVKDELVIPLLIGLCDKAGLESPPCLMLLPTELKLKILELLPGVSIGYMACVCTEMRYLASDNDLWEHKCLEEGKGCLWKLYTGDVDWKRKFASFWRRKRLDLLARRNPPIKKSNPRFPTLFPDRRDRREPFDRFGPSDFYRFGLRDPRDRFGPRDPRDPHFYGFRY.

Residues 1 to 15 show a composition bias toward polar residues; sequence MDTGFADSNNDSSPG. The tract at residues 1-29 is disordered; the sequence is MDTGFADSNNDSSPGEGSKRGNSGIEGPV. The F-box domain maps to 206–252; that stretch reads PPCLMLLPTELKLKILELLPGVSIGYMACVCTEMRYLASDNDLWEHK.

The protein is Putative F-box protein At1g23770 of Arabidopsis thaliana (Mouse-ear cress).